The sequence spans 215 residues: Ribose-5-phosphate isomerase A (215 aa).

Substrate-binding positions include 26-29 (TGST), 79-82 (DGAD), and 92-95 (KGGG). Residue Glu101 is the Proton acceptor of the active site. Lys119 is a substrate binding site.

This sequence belongs to the ribose 5-phosphate isomerase family. Homodimer.

It carries out the reaction aldehydo-D-ribose 5-phosphate = D-ribulose 5-phosphate. Its pathway is carbohydrate degradation; pentose phosphate pathway; D-ribose 5-phosphate from D-ribulose 5-phosphate (non-oxidative stage): step 1/1. Catalyzes the reversible conversion of ribose-5-phosphate to ribulose 5-phosphate. In Xanthomonas euvesicatoria pv. vesicatoria (strain 85-10) (Xanthomonas campestris pv. vesicatoria), this protein is Ribose-5-phosphate isomerase A.